We begin with the raw amino-acid sequence, 349 residues long: UDP-N-acetylenolpyruvoylglucosamine reductase (349 aa).

The region spanning 25 to 197 (GIAATARYAA…VAVTFRLPKR (173 aa)) is the FAD-binding PCMH-type domain. The active site involves arginine 173. Residue serine 249 is the Proton donor of the active site. Residue glutamate 345 is part of the active site.

Belongs to the MurB family. FAD serves as cofactor.

Its subcellular location is the cytoplasm. The enzyme catalyses UDP-N-acetyl-alpha-D-muramate + NADP(+) = UDP-N-acetyl-3-O-(1-carboxyvinyl)-alpha-D-glucosamine + NADPH + H(+). It functions in the pathway cell wall biogenesis; peptidoglycan biosynthesis. Functionally, cell wall formation. This is UDP-N-acetylenolpyruvoylglucosamine reductase from Burkholderia vietnamiensis (strain G4 / LMG 22486) (Burkholderia cepacia (strain R1808)).